We begin with the raw amino-acid sequence, 369 residues long: S-(hydroxymethyl)glutathione dehydrogenase (369 aa).

Cys40, His62, Cys92, Cys95, Cys98, Cys106, and Cys169 together coordinate Zn(2+).

This sequence belongs to the zinc-containing alcohol dehydrogenase family. Class-III subfamily. Homodimer. The cofactor is Zn(2+).

It is found in the cytoplasm. The catalysed reaction is S-(hydroxymethyl)glutathione + NADP(+) = S-formylglutathione + NADPH + H(+). It carries out the reaction S-(hydroxymethyl)glutathione + NAD(+) = S-formylglutathione + NADH + H(+). The enzyme catalyses a primary alcohol + NAD(+) = an aldehyde + NADH + H(+). It catalyses the reaction a secondary alcohol + NAD(+) = a ketone + NADH + H(+). The catalysed reaction is S-nitrosoglutathione + NADH + H(+) = S-(hydroxysulfenamide)glutathione + NAD(+). In terms of biological role, has high formaldehyde dehydrogenase activity in the presence of glutathione and catalyzes the oxidation of normal alcohols in a reaction that is not GSH-dependent. In addition, hemithiolacetals other than those formed from GSH, including omega-thiol fatty acids, also are substrates. Also acts as a S-nitroso-glutathione reductase by catalyzing the NADH-dependent reduction of S-nitrosoglutathione. This chain is S-(hydroxymethyl)glutathione dehydrogenase (frmA), found in Escherichia coli (strain SMS-3-5 / SECEC).